Consider the following 436-residue polypeptide: Trigger factor (436 aa).

Positions 163-248 (GDTVNIDFDG…VNEIKYKDVP (86 aa)) constitute a PPIase FKBP-type domain.

This sequence belongs to the FKBP-type PPIase family. Tig subfamily.

The protein resides in the cytoplasm. The enzyme catalyses [protein]-peptidylproline (omega=180) = [protein]-peptidylproline (omega=0). In terms of biological role, involved in protein export. Acts as a chaperone by maintaining the newly synthesized protein in an open conformation. Functions as a peptidyl-prolyl cis-trans isomerase. This Staphylococcus saprophyticus subsp. saprophyticus (strain ATCC 15305 / DSM 20229 / NCIMB 8711 / NCTC 7292 / S-41) protein is Trigger factor.